Reading from the N-terminus, the 310-residue chain is Olfactory receptor 10G2 (310 aa).

At 1 to 29 (MGKTKNTSLDAVVTDFILLGLSHPPNLRS) the chain is on the extracellular side. N6 is a glycosylation site (N-linked (GlcNAc...) asparagine). Residues 30–50 (LLFLVFFIIYILTQLGNLLIL) traverse the membrane as a helical segment. Topologically, residues 51–58 (LTMWADPK) are cytoplasmic. A helical membrane pass occupies residues 59-80 (LCARPMYILLGVLSFLDMWLSS). Residues 81–104 (VTVPLLILDFTPSIKAIPFGGCVA) lie on the Extracellular side of the membrane. A disulfide bond links C102 and C194. The helical transmembrane segment at 105–125 (QLYFFHFLGSTQCFLYTLMAY) threads the bilayer. The Cytoplasmic portion of the chain corresponds to 126–144 (DRYLAICQPLRYPVLMNGR). A helical membrane pass occupies residues 145 to 165 (LCTVLVAGAWVAGSMHGSIQA). The Extracellular portion of the chain corresponds to 166–202 (TLTFRLPYCGPNQVDYFICDIPAVLRLACADTTVNEL). Residues 203–222 (VTFVDVGVVAASCFMLILLS) form a helical membrane-spanning segment. Residues 223–242 (YANIVNAILKIRTTDGRRRA) lie on the Cytoplasmic side of the membrane. The chain crosses the membrane as a helical span at residues 243–263 (FSTCGSHLIVVTVYYVPCIFI). Over 264 to 274 (YLRAGSKDPLD) the chain is Extracellular. Residues 275–295 (GAAAVFYTVVTPLLNPLIYTL) form a helical membrane-spanning segment. The Cytoplasmic portion of the chain corresponds to 296-310 (RNQEVKSALKRITAG).

The protein belongs to the G-protein coupled receptor 1 family.

It localises to the cell membrane. In terms of biological role, odorant receptor. This is Olfactory receptor 10G2 (OR10G2) from Homo sapiens (Human).